The sequence spans 182 residues: Riboflavin kinase (182 aa).

Positions 39 and 41 each coordinate Mg(2+). The Nucleophile role is filled by Glu-117.

This sequence belongs to the flavokinase family. Zn(2+) serves as cofactor. The cofactor is Mg(2+).

It catalyses the reaction riboflavin + ATP = FMN + ADP + H(+). Its pathway is cofactor biosynthesis; FMN biosynthesis; FMN from riboflavin (ATP route): step 1/1. Its function is as follows. Catalyzes the phosphorylation of riboflavin (vitamin B2) to form flavin mononucleotide (FMN) coenzyme. This Lodderomyces elongisporus (strain ATCC 11503 / CBS 2605 / JCM 1781 / NBRC 1676 / NRRL YB-4239) (Yeast) protein is Riboflavin kinase (FMN1).